The sequence spans 473 residues: Photosystem II CP43 reaction center protein (473 aa).

Residues 1-14 constitute a propeptide that is removed on maturation; the sequence is MKTLYSLRRFYPVE. Thr15 carries the post-translational modification N-acetylthreonine. Position 15 is a phosphothreonine (Thr15). A run of 5 helical transmembrane segments spans residues 69 to 93, 134 to 155, 178 to 200, 255 to 275, and 291 to 312; these read LFEV…PHLA, LLGP…KDRN, KALY…RKIT, KPFA…LSYS, and WFNN…ASQA. Glu367 contributes to the [CaMn4O5] cluster binding site. The helical transmembrane segment at 447–471 threads the bilayer; that stretch reads RARAAAAGFEKGIDRDLEPVLSMTP.

It belongs to the PsbB/PsbC family. PsbC subfamily. PSII is composed of 1 copy each of membrane proteins PsbA, PsbB, PsbC, PsbD, PsbE, PsbF, PsbH, PsbI, PsbJ, PsbK, PsbL, PsbM, PsbT, PsbX, PsbY, PsbZ, Psb30/Ycf12, at least 3 peripheral proteins of the oxygen-evolving complex and a large number of cofactors. It forms dimeric complexes. Binds multiple chlorophylls and provides some of the ligands for the Ca-4Mn-5O cluster of the oxygen-evolving complex. It may also provide a ligand for a Cl- that is required for oxygen evolution. PSII binds additional chlorophylls, carotenoids and specific lipids. is required as a cofactor.

The protein localises to the plastid. It localises to the chloroplast thylakoid membrane. Functionally, one of the components of the core complex of photosystem II (PSII). It binds chlorophyll and helps catalyze the primary light-induced photochemical processes of PSII. PSII is a light-driven water:plastoquinone oxidoreductase, using light energy to abstract electrons from H(2)O, generating O(2) and a proton gradient subsequently used for ATP formation. This chain is Photosystem II CP43 reaction center protein, found in Dioscorea elephantipes (Elephant's foot yam).